The primary structure comprises 363 residues: 3-dehydroquinate synthase (363 aa).

NAD(+) contacts are provided by residues 134-135 (TT), Lys147, Lys156, and 174-177 (TLIT). Residues Glu189, His254, and His271 each contribute to the Zn(2+) site.

It belongs to the sugar phosphate cyclases superfamily. Dehydroquinate synthase family. Requires NAD(+) as cofactor. It depends on Co(2+) as a cofactor. The cofactor is Zn(2+).

Its subcellular location is the cytoplasm. The catalysed reaction is 7-phospho-2-dehydro-3-deoxy-D-arabino-heptonate = 3-dehydroquinate + phosphate. The protein operates within metabolic intermediate biosynthesis; chorismate biosynthesis; chorismate from D-erythrose 4-phosphate and phosphoenolpyruvate: step 2/7. In terms of biological role, catalyzes the conversion of 3-deoxy-D-arabino-heptulosonate 7-phosphate (DAHP) to dehydroquinate (DHQ). This is 3-dehydroquinate synthase from Prochlorococcus marinus subsp. pastoris (strain CCMP1986 / NIES-2087 / MED4).